We begin with the raw amino-acid sequence, 160 residues long: MKRAFERMSMAIAIRNQQKKVKIDLRQIRRRVQKLLRLVDCREKEISLLFVDDEEIQEINQRYLGRNYPTNVISFSLSEGEFSSVNPDVLGDIVISVDTASRDAERGNIPVSDELDFLIIHGLLHILGYNHENNNPEETACMQKKEQELFFLLHGYPLDF.

Zn(2+) is bound by residues His-121, His-125, and His-131.

It belongs to the endoribonuclease YbeY family. Zn(2+) serves as cofactor.

Its subcellular location is the cytoplasm. In terms of biological role, single strand-specific metallo-endoribonuclease involved in late-stage 70S ribosome quality control and in maturation of the 3' terminus of the 16S rRNA. This is Endoribonuclease YbeY from Syntrophus aciditrophicus (strain SB).